A 243-amino-acid polypeptide reads, in one-letter code: NAD-dependent protein deacylase (243 aa).

Residues methionine 1 to glycine 234 form the Deacetylase sirtuin-type domain. Glycine 10–tryptophan 29 contacts NAD(+). 2 residues coordinate substrate: tyrosine 54 and arginine 57. An NAD(+)-binding site is contributed by glutamine 91–aspartate 94. The active-site Proton acceptor is the histidine 109. Residues cysteine 117 and cysteine 136 each contribute to the Zn(2+) site. NAD(+)-binding positions include glycine 176–serine 178, asparagine 202–glutamine 204, and alanine 220.

Belongs to the sirtuin family. Class III subfamily. Requires Zn(2+) as cofactor.

Its subcellular location is the cytoplasm. The enzyme catalyses N(6)-acetyl-L-lysyl-[protein] + NAD(+) + H2O = 2''-O-acetyl-ADP-D-ribose + nicotinamide + L-lysyl-[protein]. The catalysed reaction is N(6)-succinyl-L-lysyl-[protein] + NAD(+) + H2O = 2''-O-succinyl-ADP-D-ribose + nicotinamide + L-lysyl-[protein]. In terms of biological role, NAD-dependent lysine deacetylase and desuccinylase that specifically removes acetyl and succinyl groups on target proteins. Modulates the activities of several proteins which are inactive in their acylated form. The chain is NAD-dependent protein deacylase from Shewanella oneidensis (strain ATCC 700550 / JCM 31522 / CIP 106686 / LMG 19005 / NCIMB 14063 / MR-1).